We begin with the raw amino-acid sequence, 858 residues long: DNA mismatch repair protein MutS (858 aa).

Residue 637 to 644 coordinates ATP; sequence GPNMAGKS.

The protein belongs to the DNA mismatch repair MutS family.

Functionally, this protein is involved in the repair of mismatches in DNA. It is possible that it carries out the mismatch recognition step. This protein has a weak ATPase activity. This Protochlamydia amoebophila (strain UWE25) protein is DNA mismatch repair protein MutS.